The sequence spans 413 residues: Adenylosuccinate synthetase (413 aa).

GTP-binding positions include 11–17 (GDEGKGK) and 39–41 (GHT). Catalysis depends on Asp-12, which acts as the Proton acceptor. Asp-12 and Gly-39 together coordinate Mg(2+). Residues 12–15 (DEGK), 37–40 (NAGH), Thr-125, Arg-139, Gln-217, Thr-232, and Arg-296 each bind IMP. Residue His-40 is the Proton donor of the active site. 292-298 (TTTGRPR) contributes to the substrate binding site. Residues Arg-298, 324–326 (KLD), and 402–404 (STG) each bind GTP.

It belongs to the adenylosuccinate synthetase family. In terms of assembly, homodimer. Mg(2+) is required as a cofactor.

Its subcellular location is the cytoplasm. The catalysed reaction is IMP + L-aspartate + GTP = N(6)-(1,2-dicarboxyethyl)-AMP + GDP + phosphate + 2 H(+). Its pathway is purine metabolism; AMP biosynthesis via de novo pathway; AMP from IMP: step 1/2. Plays an important role in the de novo pathway of purine nucleotide biosynthesis. Catalyzes the first committed step in the biosynthesis of AMP from IMP. This chain is Adenylosuccinate synthetase, found in Nautilia profundicola (strain ATCC BAA-1463 / DSM 18972 / AmH).